Reading from the N-terminus, the 422-residue chain is Ribosomal RNA small subunit methyltransferase B (422 aa).

S-adenosyl-L-methionine contacts are provided by residues 254–260, Asp-277, Asp-303, and Asp-322; that span reads CAAPGGK. The Nucleophile role is filled by Cys-375.

Belongs to the class I-like SAM-binding methyltransferase superfamily. RsmB/NOP family.

It is found in the cytoplasm. The catalysed reaction is cytidine(967) in 16S rRNA + S-adenosyl-L-methionine = 5-methylcytidine(967) in 16S rRNA + S-adenosyl-L-homocysteine + H(+). Specifically methylates the cytosine at position 967 (m5C967) of 16S rRNA. The polypeptide is Ribosomal RNA small subunit methyltransferase B (Proteus mirabilis (strain HI4320)).